A 315-amino-acid chain; its full sequence is Probable cell division protein WhiA (315 aa).

Residues 275-309 (NLKELGEMVPSGVVSKSGINHRLRKINEIADKIRE) constitute a DNA-binding region (H-T-H motif).

This sequence belongs to the WhiA family.

Functionally, involved in cell division and chromosome segregation. This Brevibacillus brevis (strain 47 / JCM 6285 / NBRC 100599) protein is Probable cell division protein WhiA.